The following is a 674-amino-acid chain: Protein tesmin/TSO1-like CXC 2 (674 aa).

Polar residues-rich tracts occupy residues 1–16 and 76–89; these read MDTPQKSITQIGTPIS and THNSSSSDPTNSVE. Disordered regions lie at residues 1 to 20 and 69 to 113; these read MDTPQKSITQIGTPISKSRF and KESR…GLNI. Positions 95 to 109 are enriched in basic and acidic residues; it reads STSHEEVPAEGEDTK. In terms of domain architecture, CRC spans 373 to 498; the sequence is SCKRCNCKKS…RCEGCKNAFG (126 aa). Disordered regions lie at residues 504-529 and 623-655; these read SIDMEAEQEEENETSEKSRTAKSQQN and IPNIKSVSPNGKRVSPPHMESSSSGSILGRRNG. Residues 507–516 show a composition bias toward acidic residues; sequence MEAEQEEENE.

Belongs to the lin-54 family. As to expression, ubiquitous but expressed mostly in all the aerial organs with highest expression in flowers.

The protein localises to the nucleus. Functionally, plays a role in development of both male and female reproductive tissues. This chain is Protein tesmin/TSO1-like CXC 2 (TCX2), found in Arabidopsis thaliana (Mouse-ear cress).